Here is a 500-residue protein sequence, read N- to C-terminus: Perfringolysin O (500 aa).

An N-terminal signal peptide occupies residues 1–28 (MIRFKKTKLIASIAMALCLFSQPVISFS). 4 beta stranded membrane-spanning segments follow: residues 189 to 202 (KSQISSALNVNAKV), 209 to 218 (VDFNAVANNE), 287 to 296 (SKDVQAAFKA), and 304 to 316 (KNSQQYKDIYENS). The short motif at 458–468 (ECTGLAWEWWR) is the Conserved undecapeptide element. A Cholesterol binding motif is present at residues 490–491 (TL).

Belongs to the cholesterol-dependent cytolysin family. In terms of assembly, modeling based on cryo-EM shows a homooligomeric pore complex containing 38-44 subunits; when inserted in the host membrane.

It is found in the secreted. Its subcellular location is the host cell membrane. Its function is as follows. A cholesterol-dependent toxin that causes cytolysis by forming pores in cholesterol-containing host membranes. After binding to target membranes, the protein assembles into a pre-pore complex. A major conformational change leads to insertion in the host membrane and formation of an oligomeric pore complex. Cholesterol is required for binding to host cell membranes, membrane insertion and pore formation; cholesterol binding is mediated by a Thr-Leu pair in the C-terminus. Can be reversibly inactivated by oxidation. This chain is Perfringolysin O (pfo), found in Clostridium perfringens (strain 13 / Type A).